We begin with the raw amino-acid sequence, 132 residues long: Small ribosomal subunit protein uS8 (132 aa).

The protein belongs to the universal ribosomal protein uS8 family. As to quaternary structure, part of the 30S ribosomal subunit. Contacts proteins S5 and S12.

One of the primary rRNA binding proteins, it binds directly to 16S rRNA central domain where it helps coordinate assembly of the platform of the 30S subunit. The protein is Small ribosomal subunit protein uS8 of Bifidobacterium animalis subsp. lactis (strain AD011).